We begin with the raw amino-acid sequence, 326 residues long: MSILPVIFLSIFFYSSFVQTFNAPECIDKGQYFASFMELENEPVILPCPQINTLSSGYNILDILWEKRGADNDRIIPIDNGSNMLILNPTQSDSGIYICITTNETYCDMMSLNLTIVSVSESNIDLISYPQIVNERSTGEMVCPNINAFIASNVNADIIWSGHRRLRNKRLKQRTPGIITIEDVRKNDAGYYTCVLEYIYGGKTYNVTRIVKLEVRDKIIPSTMQLPEGVVTSIGSNLTIACRVSLRPPTTDADVFWISNGMYYEEDDGDGDGRISVANKIYMTDKRRVITSRLNINPVKEEDATTFTCMAFTIPSISKTVTVSIT.

The N-terminal stretch at 1–18 is a signal peptide; the sequence is MSILPVIFLSIFFYSSFV. 3 Ig-like domains span residues 24–115, 122–212, and 221–322; these read PECI…LNLT, SNID…RIVK, and PSTM…KTVT. Cys48 and Cys99 are oxidised to a cystine. Asn80, Asn103, and Asn113 each carry an N-linked (GlcNAc...) asparagine; by host glycan. Cysteines 143 and 194 form a disulfide. Residues Asn206 and Asn237 are each glycosylated (N-linked (GlcNAc...) asparagine; by host). Residues Cys242 and Cys309 are joined by a disulfide bond.

It belongs to the interleukin-1 receptor family. Interacts with mouse Il1b.

It is found in the secreted. In terms of biological role, may reduce the host inflammatory response by interacting with inteleukin-1 beta (Il1b) and thus decreasing the association between IL1B and its cellular receptor. This is Interleukin-1-binding protein (OPG201) from Vaccinia virus (strain Ankara) (VACV).